A 377-amino-acid polypeptide reads, in one-letter code: MSADGEFTRTQIFGTVFEITNRYTELNPVGMGAFGLVCSAVDRLTGQNVAVKKVMKPFSTSVLAKRTYRELKLLKHLKHENLITLDDIFISPLEDIYFVNELQGTDLHRLLNSRPLEKQFIQYFTYQIMRGLKYIHSAGVIHRDLKPSNILINENCDLKICDFGLARLQDPQMTGYVSTRYYRAPEIMLTWQKYDTEVDLWSVGCILAEMIEGKPLFPGKDHVHQFSIITELLGSPPADVIDTICSENTLRFVQSLPHRDPIPFSERFASCTHVEPEAIDLLAKLLVFDPKKRISAVEGLTHPYMEAYHDPTDEPVCESKFDWSFNDADLPVDTWRVMMYSEILDFHQTVGVANETEGSEQPDSQVEQNNLDSANGA.

The Protein kinase domain occupies 23 to 305 (YTELNPVGMG…AVEGLTHPYM (283 aa)). ATP is bound by residues 29–37 (VGMGAFGLV) and Lys-52. The active-site Proton acceptor is the Asp-144. Position 174 is a phosphothreonine (Thr-174). Residues 174-176 (TGY) carry the TXY motif. Tyr-176 bears the Phosphotyrosine mark. A disordered region spans residues 354 to 377 (NETEGSEQPDSQVEQNNLDSANGA). Polar residues predominate over residues 359-377 (SEQPDSQVEQNNLDSANGA).

Belongs to the protein kinase superfamily. Ser/Thr protein kinase family. MAP kinase subfamily. HOG1 sub-subfamily. Mg(2+) is required as a cofactor. In terms of processing, dually phosphorylated on Thr-174 and Tyr-176, which activates the enzyme. Phosphorylated in response to oxidative and salt stress.

The protein resides in the cytoplasm. The protein localises to the nucleus. The catalysed reaction is L-seryl-[protein] + ATP = O-phospho-L-seryl-[protein] + ADP + H(+). It carries out the reaction L-threonyl-[protein] + ATP = O-phospho-L-threonyl-[protein] + ADP + H(+). Activated by tyrosine and threonine phosphorylation. In terms of biological role, proline-directed serine/threonine-protein kinase involved in a signal transduction pathway that is activated by changes in the osmolarity of the extracellular environment. Controls osmotic regulation of transcription of target genes. Regulates stress-induced production and accumulation of glycerol and D-arabitol. HOG1 is also involved in virulence, morphogenesis and oxidative stress response especially through its role in chlamydospore formation, an oxygen-dependent morphogenetic program. This Candida albicans (strain SC5314 / ATCC MYA-2876) (Yeast) protein is Mitogen-activated protein kinase HOG1 (HOG1).